We begin with the raw amino-acid sequence, 196 residues long: Charged multivesicular body protein 1a (196 aa).

Met1 is subject to N-acetylmethionine. A coiled-coil region spans residues 5–47 (LFQLKFTAKQLEKLAKKAEKDSKAEQAKVKKALLQKNVECARV). Position 101 is a phosphoserine (Ser101). Residues 102 to 124 (TMDLQKVSSVMDRFEQQVQNLDV) are a coiled coil. Phosphoserine is present on Ser173. Positions 173–196 (SAVGESSVRSQEDQLSRRLAALRN) are disordered. An MIT-interacting motif motif is present at residues 185 to 195 (DQLSRRLAALR).

It belongs to the SNF7 family. In terms of assembly, probable peripherally associated component of the endosomal sorting required for transport complex III (ESCRT-III). ESCRT-III components are thought to multimerize to form a flat lattice on the perimeter membrane of the endosome. Several assembly forms of ESCRT-III may exist that interact and act sequentially. Self-associates. Interacts with CHMP1B. Interacts with VPS4A. Interacts with VPS4B. Interacts with PHF1. Interacts with IST1. Interacts with MITD1. As to expression, expressed in placenta, cultured skin fibroblasts and in osteoblast cell line MG-63.

The protein resides in the cytoplasm. The protein localises to the endosome membrane. Its subcellular location is the nucleus matrix. Its function is as follows. Probable peripherally associated component of the endosomal sorting required for transport complex III (ESCRT-III) which is involved in multivesicular bodies (MVBs) formation and sorting of endosomal cargo proteins into MVBs. MVBs contain intraluminal vesicles (ILVs) that are generated by invagination and scission from the limiting membrane of the endosome and mostly are delivered to lysosomes enabling degradation of membrane proteins, such as stimulated growth factor receptors, lysosomal enzymes and lipids. The MVB pathway appears to require the sequential function of ESCRT-O, -I,-II and -III complexes. ESCRT-III proteins mostly dissociate from the invaginating membrane before the ILV is released. The ESCRT machinery also functions in topologically equivalent membrane fission events, such as the terminal stages of cytokinesis and the budding of enveloped viruses (HIV-1 and other lentiviruses). ESCRT-III proteins are believed to mediate the necessary vesicle extrusion and/or membrane fission activities, possibly in conjunction with the AAA ATPase VPS4. Involved in cytokinesis. Involved in recruiting VPS4A and/or VPS4B to the midbody of dividing cells. May also be involved in chromosome condensation. Targets the Polycomb group (PcG) protein BMI1/PCGF4 to regions of condensed chromatin. May play a role in stable cell cycle progression and in PcG gene silencing. This Homo sapiens (Human) protein is Charged multivesicular body protein 1a (CHMP1A).